Reading from the N-terminus, the 244-residue chain is Adenosylcobinamide-GDP ribazoletransferase (244 aa).

Transmembrane regions (helical) follow at residues 31–51 (LLFYPVVGLLFGLLLWLASHL), 55–75 (APAPLHAALLLALWVLLSGAL), 109–129 (IAVVVLVLVLLLKFCALWVLV), 134–154 (GGWLVLAPVVGRAAMLGLFMG), and 188–208 (VVLGGSPGLWMLLLSLGVFLW).

This sequence belongs to the CobS family. Mg(2+) is required as a cofactor.

It localises to the cell inner membrane. The catalysed reaction is alpha-ribazole + adenosylcob(III)inamide-GDP = adenosylcob(III)alamin + GMP + H(+). The enzyme catalyses alpha-ribazole 5'-phosphate + adenosylcob(III)inamide-GDP = adenosylcob(III)alamin 5'-phosphate + GMP + H(+). The protein operates within cofactor biosynthesis; adenosylcobalamin biosynthesis; adenosylcobalamin from cob(II)yrinate a,c-diamide: step 7/7. Functionally, joins adenosylcobinamide-GDP and alpha-ribazole to generate adenosylcobalamin (Ado-cobalamin). Also synthesizes adenosylcobalamin 5'-phosphate from adenosylcobinamide-GDP and alpha-ribazole 5'-phosphate. In Pseudomonas entomophila (strain L48), this protein is Adenosylcobinamide-GDP ribazoletransferase.